The chain runs to 119 residues: Large ribosomal subunit protein bL20 (119 aa).

Belongs to the bacterial ribosomal protein bL20 family.

Functionally, binds directly to 23S ribosomal RNA and is necessary for the in vitro assembly process of the 50S ribosomal subunit. It is not involved in the protein synthesizing functions of that subunit. In Methylocella silvestris (strain DSM 15510 / CIP 108128 / LMG 27833 / NCIMB 13906 / BL2), this protein is Large ribosomal subunit protein bL20.